Reading from the N-terminus, the 143-residue chain is Trypsin inhibitor CMc (143 aa).

An N-terminal signal peptide occupies residues 1-24; the sequence is MASCSQHLLSAVAIFSVLAGVATA.

This sequence belongs to the protease inhibitor I6 (cereal trypsin/alpha-amylase inhibitor) family. In terms of tissue distribution, endosperm.

It localises to the secreted. Its function is as follows. Trypsin inhibitor. No alpha-amylase inhibition detected. This is Trypsin inhibitor CMc (ITR2) from Hordeum vulgare (Barley).